Reading from the N-terminus, the 375-residue chain is Putative disease resistance protein At3g15700 (375 aa).

Positions 17-49 (KENDNVKKLKTATEELKDLRNIVMKRVKMYEDQ) form a coiled coil. The NB-ARC domain occupies 158–372 (DNTGIIGLYG…LSTSPPNFSG (215 aa)). 167–174 (GVEGVGKT) lines the ATP pocket.

In terms of biological role, potential disease resistance protein. The chain is Putative disease resistance protein At3g15700 from Arabidopsis thaliana (Mouse-ear cress).